The sequence spans 206 residues: MFDKAIIEFDKALRTVFAPARSVRPVPGDDVPDAPLDDEQKRHAAALMRVNHVGEICAQALYQGQAIMSGDERVREELQRASHEETEHLAWTEQRIAELGGRKSLLNPLWYGGALAIGMLAGRFGDRWNLGFLAETERQVEAHLTSHLERLPADDRKSRAIVEQMRTDEVEHAETALKLGGRELPLPVRSAMKLASRVMTTAAYRV.

Glu-55, Glu-85, His-88, Glu-137, Glu-169, and His-172 together coordinate Fe cation.

The protein belongs to the COQ7 family. Fe cation is required as a cofactor.

It is found in the cell membrane. It carries out the reaction a 5-methoxy-2-methyl-3-(all-trans-polyprenyl)benzene-1,4-diol + AH2 + O2 = a 3-demethylubiquinol + A + H2O. Its pathway is cofactor biosynthesis; ubiquinone biosynthesis. Its function is as follows. Catalyzes the hydroxylation of 2-nonaprenyl-3-methyl-6-methoxy-1,4-benzoquinol during ubiquinone biosynthesis. The chain is 3-demethoxyubiquinol 3-hydroxylase from Azoarcus sp. (strain BH72).